Here is a 255-residue protein sequence, read N- to C-terminus: 5'-nucleotidase SurE (255 aa).

Residues Asp-7, Asp-8, Ser-38, and Asn-90 each coordinate a divalent metal cation.

Belongs to the SurE nucleotidase family. A divalent metal cation is required as a cofactor.

It localises to the cytoplasm. It catalyses the reaction a ribonucleoside 5'-phosphate + H2O = a ribonucleoside + phosphate. In terms of biological role, nucleotidase that shows phosphatase activity on nucleoside 5'-monophosphates. The protein is 5'-nucleotidase SurE of Picrophilus torridus (strain ATCC 700027 / DSM 9790 / JCM 10055 / NBRC 100828 / KAW 2/3).